Reading from the N-terminus, the 217-residue chain is Pyrophosphatase PpaX (217 aa).

The active-site Nucleophile is the D11.

The protein belongs to the HAD-like hydrolase superfamily. PpaX family. Mg(2+) serves as cofactor.

It catalyses the reaction diphosphate + H2O = 2 phosphate + H(+). Functionally, hydrolyzes pyrophosphate formed during P-Ser-HPr dephosphorylation by HPrK/P. Might play a role in controlling the intracellular pyrophosphate pool. The protein is Pyrophosphatase PpaX of Listeria monocytogenes serotype 4b (strain CLIP80459).